The chain runs to 4059 residues: Fibrocystin (4059 aa).

The N-terminal stretch at 1–18 (MMLAWLVSLLSMEVLLLA) is a signal peptide. At 19–3851 (KPYSSFQFEP…LPVASKERST (3833 aa)) the chain is on the extracellular side. Residues 25–109 (QFEPAEGSLA…AGPYSLEMRS (85 aa)) form the IPT/TIG 1; atypical domain. Residues Asn55 and Asn224 are each glycosylated (N-linked (GlcNAc...) asparagine). IPT/TIG domains lie at 135 to 230 (PVLY…FSVF) and 257 to 333 (PEIL…FEVG). One can recognise a PA14 domain in the interval 323–483 (AGNRGLRFEV…TWLNPDVVNT (161 aa)). N-linked (GlcNAc...) asparagine glycosylation is found at Asn355, Asn385, Asn518, Asn527, Asn620, Asn639, Asn709, Asn867, Asn965, Asn975, Asn1082, Asn1114, Asn1133, Asn1239, Asn1273, Asn1308, Asn1319, Asn1344, Asn1373, Asn1456, Asn1471, Asn1528, Asn1613, Asn1627, Asn1694, Asn1760, Asn1775, Asn1875, Asn1879, Asn1915, Asn1955, Asn2030, and Asn2139. IPT/TIG domains follow at residues 945 to 997 (LVHF…FMLV) and 1017 to 1100 (PRLD…AFTY). In terms of domain architecture, IPT/TIG 6; atypical spans 1106–1190 (PVIVSLSRNR…IRSQGVDLYI (85 aa)). Residues 1198–1266 (SVEPCSGSLL…RADVLTVLAS (69 aa)) enclose the IPT/TIG 7 domain. Positions 1297-1378 (PVVTAMWGEF…MGFANMSVVP (82 aa)) constitute an IPT/TIG 8; atypical domain. The IPT/TIG 9 domain maps to 1385–1466 (PQIIAIFPTH…ITVLVNGLTS (82 aa)). 2 consecutive IPT/TIG domains span residues 1482–1566 (PIVD…RNFF) and 1569–1637 (PQVL…IDVN). The 85-residue stretch at 1654–1738 (PELLSVSRSQ…VLRATVTSVT (85 aa)) folds into the IPT/TIG 12; atypical domain. Positions 1928–2049 (HSWFPQRVPH…PEVTVTYLQA (122 aa)) constitute a G8 1 domain. PbH1 repeat units follow at residues 2244-2266 (TWGL…LLGS) and 2287-2321 (EQGS…YTFS). N-linked (GlcNAc...) asparagine glycosylation occurs at Asn2380. PbH1 repeat units follow at residues 2404-2426 (SNNL…DILE) and 2459-2481 (RWEL…AIRT). Residues Asn2466, Asn2503, Asn2529, Asn2547, Asn2581, Asn2589, Asn2627, Asn2747, and Asn2762 are each glycosylated (N-linked (GlcNAc...) asparagine). One can recognise a G8 2 domain in the interval 2741 to 2867 (KGWGGYNHTI…PKKSWVHLGA (127 aa)). PbH1 repeat units follow at residues 3004-3026 (SAGS…HASS) and 3027-3049 (SHGV…DVEG). Asn3051 carries N-linked (GlcNAc...) asparagine glycosylation. One copy of the PbH1 7 repeat lies at 3080–3102 (AEDIILHGNVVAGSERLGFHVGG). Residues Asn3133 and Asn3162 are each glycosylated (N-linked (GlcNAc...) asparagine). The PbH1 8 repeat unit spans residues 3188 to 3212 (TVQITLRNSVIVATSSSFDCIHDRK). N-linked (GlcNAc...) asparagine glycosylation is found at Asn3218, Asn3719, and Asn3831. A helical transmembrane segment spans residues 3852-3872 (IILALSLCSVASWVALSCLVC). The interval 3869–3886 (CLVCCWFKKSKTRKIKPE) is ciliary targeting sequence (CST). Over 3873-4059 (CWFKKSKTRK…LHTAPPETIQ (187 aa)) the chain is Cytoplasmic. Over residues 3885–3898 (PEDISESQAKEQKK) the composition is skewed to basic and acidic residues. The disordered stretch occupies residues 3885-3915 (PEDISESQAKEQKKNTHNSSKPRGLQAKTAK). Residues 3946 to 3970 (KRKVSRLAVTEERTTTPAPKIPRIT) are nuclear localization signal (NLS). Positions 4015–4038 (QERKQGQEPSQLDKGSDCTGLSQE) are disordered.

As to quaternary structure, interacts with CAMLG. Interacts with PKD2. Interacts (via CST) with ARF4; this interaction allows an efficient PKHD1 trafficking to the cilium. Interacts (via CST) with RAB8A; this interaction controls trafficking through the endomembrane systeme and to the cilium. Interacts (via CST) with TULP3; this interaction allows PKHD1 trafficking to the cilium. In terms of processing, palmitoylated. Palmitoylation facilitates the trafficking to the cilia and membrane targeting. N-glycosylated. Post-translationally, several proteolytic cleavages occur within the extracellular domain, whereas at least one cleavage occurs within the cytoplasmic domain. Cleaved by a probable proprotein convertase which produces an extracellular domain (polyductin extracellular domain, (PECD)) and a C-terminal fragment (polyductin transmembrane fragment (PTM)) which are tethered together by disulfide bonds. This extracellular domain (PECD) is then shed from the primary cilium by activation of a member of the ADAM metalloproteinase disintegrins family, resulting in concomitant release of an intra-cellular C-terminal fragment (ICD) via a gamma-secretase-dependent process. The proteolytic cleavage of the C-terminal intracellular fragment (ICD) is controlled by cytosolic calcium concentration and activation of PKC. Expressed in bile ducts and distal nephron segments but is absent from the proximal tubule. Expressed in pancreas and kidney but also in the liver. Expressed primarily in the distal tubule and thick ascending limb of the loop of Henle, and at low-level in the proximal tubule before renal development is complete at P0.

The protein resides in the cell membrane. It is found in the cytoplasm. The protein localises to the apical cell membrane. Its subcellular location is the cytoskeleton. It localises to the cilium basal body. The protein resides in the cell projection. It is found in the cilium. The protein localises to the spindle. Its subcellular location is the chromosome. It localises to the centromere. The protein resides in the nucleus. It is found in the secreted. The protein localises to the extracellular exosome. Its subcellular location is the endoplasmic reticulum. It localises to the golgi apparatus. Functionally, promotes ciliogenesis in renal epithelial cells and therefore participates in the tubules formation and/or ensures the maintenance of the architecture of the lumen of the kidney. Has an impact on cellular symmetry by ensuring correct bipolar cell division through the regulation of centrosome duplication and mitotic spindle assembly and by maintaining oriented cell division (OCD) during tubular elongation through planar cell polarity (PCP) pathway. During epithelial cell morphogenesis, it also regulates cell-cell and cell-matrix adhesion and participates in cell motility. Promotes cell-cell contact through the positive regulation of PTK2 kinase activity leading to either positive regulation of epithelial cell proliferation through the HRAS/RAF1 pathways, or negative regulation of apoptosis through the PDK1/AKT1 pathway. May act in collecting-duct and biliary differentiation. May participate in the regulation of the cholangiocytes proliferation and the CCN2 production in an CXCL8-dependent manner. The protein is Fibrocystin of Mus musculus (Mouse).